A 676-amino-acid chain; its full sequence is Exostosin-like 1 (676 aa).

Residues 1–9 are Cytoplasmic-facing; sequence MQSWRRRKS. A helical; Signal-anchor for type II membrane protein transmembrane segment spans residues 10 to 30; that stretch reads LWLALSASWLLLVLLGGFSLL. The Lumenal portion of the chain corresponds to 31-676; it reads RLALPPRPRP…RKKYRSLEKP (646 aa). Residues 238–264 are disordered; sequence TADTGSSACPWDGRCEQDPGPGQTQRQ. The N-linked (GlcNAc...) asparagine glycan is linked to Asn269. A disulfide bridge connects residues Cys584 and Cys634. Positions 610 to 631 are disordered; it reads RQEAAPLAPGGPGPRPKPPAPA. Over residues 618-631 the composition is skewed to pro residues; it reads PGGPGPRPKPPAPA.

It belongs to the glycosyltransferase 47 family.

Its subcellular location is the endoplasmic reticulum membrane. It catalyses the reaction 3-O-{[(1-&gt;4)-beta-D-GlcA-(1-&gt;4)-alpha-D-GlcNAc](n)-(1-&gt;4)-beta-D-GlcA-(1-&gt;3)-beta-D-Gal-(1-&gt;3)-beta-D-Gal-(1-&gt;4)-beta-D-Xyl}-L-seryl-[protein] + UDP-N-acetyl-alpha-D-glucosamine = 3-O-{alpha-D-GlcNAc-[(1-&gt;4)-beta-D-GlcA-(1-&gt;4)-alpha-D-GlcNAc](n)-(1-&gt;4)-beta-D-GlcA-(1-&gt;3)-beta-D-Gal-(1-&gt;3)-beta-D-Gal-(1-&gt;4)-beta-D-Xyl}-L-seryl-[protein] + UDP + H(+). It functions in the pathway protein modification; protein glycosylation. Functionally, glycosyltransferase required for the biosynthesis of heparan-sulfate (HS). Transfers N-acetyl-alpha-D-glucosamine to the nascent HS chain (GlcNAcT-II activity). Appears to lack GlcNAcT I and GlcAT-II activities. This Homo sapiens (Human) protein is Exostosin-like 1 (EXTL1).